The chain runs to 153 residues: UPF0756 membrane protein LSEI_1366 (153 aa).

The next 4 membrane-spanning stretches (helical) occupy residues 4 to 24 (WLFL…SLII), 52 to 72 (WGVT…EIGF), 85 to 105 (WIAI…VGLL), and 115 to 135 (LVFG…GPVI).

Belongs to the UPF0756 family.

The protein resides in the cell membrane. The protein is UPF0756 membrane protein LSEI_1366 of Lacticaseibacillus paracasei (strain ATCC 334 / BCRC 17002 / CCUG 31169 / CIP 107868 / KCTC 3260 / NRRL B-441) (Lactobacillus paracasei).